The chain runs to 361 residues: MSFKTLSALALALGAAVQFASAAVPLVQKRATCDDGRTTANAACCILFPILDDIQENLFDGAQCGEEVHESLRLTFHDAIGFSPTLGGGGADGSIIAFDTIETNFPANAGIDEIVSAQKPFVAKHNISAGDFIQFAGAVGVSNCPGGVRIPFFLGRPDAVAASPDHLVPEPFDSVDSILARMGDAGFSPVEVVWLLASHSIAAADKVDPSIPGTPFDSTPGVFDSQFFIETQLKGRLFPGTADNKGEAQSPLQGEIRLQSDHLLARDPQTACEWQSMVNNQPKIQNRFAATMSKMALLGQDKTKLIDCSDVIPTPPALVGAAHLPAGFSLSDVEQACAATPFPALTADPGPVTSVPPVPGS.

Positions 1 to 22 (MSFKTLSALALALGAAVQFASA) are cleaved as a signal peptide. The propeptide occupies 23-30 (AVPLVQKR). Cystine bridges form between Cys33–Cys45, Cys44–Cys308, Cys64–Cys144, and Cys272–Cys337. Mn(2+) contacts are provided by Glu66 and Glu70. The Proton acceptor role is filled by His77. 4 residues coordinate Ca(2+): Asp78, Gly90, Asp92, and Ser94. Asn126 carries N-linked (GlcNAc...) asparagine glycosylation. Catalysis depends on Trp194, which acts as the Tryptophan radical intermediate. His199 is a heme b binding site. Position 200 (Ser200) interacts with Ca(2+). Residue 203-207 (AADKV) coordinates heme b. Asp205 is a binding site for Mn(2+). Residues Asp217, Thr219, Val222, and Asp224 each coordinate Ca(2+).

Belongs to the peroxidase family. Ligninase subfamily. The cofactor is heme b. It depends on Ca(2+) as a cofactor.

The protein resides in the secreted. It catalyses the reaction 1-(4-hydroxy-3-methoxyphenyl)-2-(2-methoxyphenoxy)propane-1,3-diol + H2O2 = guaiacol + vanillin + glycolaldehyde + H2O. The enzyme catalyses 2 Mn(2+) + H2O2 + 2 H(+) = 2 Mn(3+) + 2 H2O. Its function is as follows. A versatile ligninolytic peroxidase that combines the substrate specificity characteristics of the two other ligninolytic peroxidases, manganese peroxidase and lignin peroxidase. This is Versatile peroxidase VPL2 (vpl2) from Pleurotus eryngii (Boletus of the steppes).